Consider the following 78-residue polypeptide: Apolipoprotein C-I (78 aa).

An N-terminal signal peptide occupies residues 1–26 (MRLILWLPVLVVVLLMVTEGPAPAQG).

Belongs to the apolipoprotein C1 family.

It is found in the secreted. Functionally, inhibitor of lipoprotein binding to the low density lipoprotein (LDL) receptor, LDL receptor-related protein, and very low density lipoprotein (VLDL) receptor. Associates with high density lipoproteins (HDL) and the triacylglycerol-rich lipoproteins in the plasma and makes up about 10% of the protein of the VLDL and 2% of that of HDL. Appears to interfere directly with fatty acid uptake and is also the major plasma inhibitor of cholesteryl ester transfer protein (CETP). Binds free fatty acids and reduces their intracellular esterification. Modulates the interaction of APOE with beta-migrating VLDL and inhibits binding of beta-VLDL to the LDL receptor-related protein. This Panthera tigris altaica (Siberian tiger) protein is Apolipoprotein C-I (APOC1).